Reading from the N-terminus, the 148-residue chain is Snaclec B2 (148 aa).

The N-terminal stretch at 1 to 24 (MGRLISVSFGLLVVFLSLSGTGAA) is a signal peptide. Cystine bridges form between Cys-27/Cys-38, Cys-55/Cys-144, and Cys-121/Cys-136. The region spanning 34 to 145 (YDQHCYKVFD…CRLLGHFVCK (112 aa)) is the C-type lectin domain.

It belongs to the snaclec family. As to quaternary structure, heterodimer; disulfide-linked. Expressed by the venom gland.

The protein localises to the secreted. Interferes with one step of hemostasis (modulation of platelet aggregation, or coagulation cascade, for example). The protein is Snaclec B2 of Macrovipera lebetinus (Levantine viper).